The primary structure comprises 285 residues: Diaminopimelate epimerase (285 aa).

Asn-11 and Asn-62 together coordinate substrate. Cys-71 (proton donor) is an active-site residue. Residues 72 to 73 (GN), Asn-167, Asn-200, and 218 to 219 (ER) contribute to the substrate site. The active-site Proton acceptor is Cys-227. 228–229 (GT) is a binding site for substrate.

This sequence belongs to the diaminopimelate epimerase family. In terms of assembly, homodimer.

It is found in the cytoplasm. The enzyme catalyses (2S,6S)-2,6-diaminopimelate = meso-2,6-diaminopimelate. Its pathway is amino-acid biosynthesis; L-lysine biosynthesis via DAP pathway; DL-2,6-diaminopimelate from LL-2,6-diaminopimelate: step 1/1. Catalyzes the stereoinversion of LL-2,6-diaminopimelate (L,L-DAP) to meso-diaminopimelate (meso-DAP), a precursor of L-lysine and an essential component of the bacterial peptidoglycan. The sequence is that of Diaminopimelate epimerase from Agathobacter rectalis (strain ATCC 33656 / DSM 3377 / JCM 17463 / KCTC 5835 / VPI 0990) (Eubacterium rectale).